A 320-amino-acid chain; its full sequence is Malate dehydrogenase (320 aa).

Residues 10 to 15 and D34 each bind NAD(+); that span reads GSGMIG. Substrate is bound by residues R83 and R89. NAD(+)-binding positions include N96 and 119-121; that span reads ITN. Substrate-binding residues include N121 and R152. H176 (proton acceptor) is an active-site residue.

This sequence belongs to the LDH/MDH superfamily. MDH type 3 family.

It catalyses the reaction (S)-malate + NAD(+) = oxaloacetate + NADH + H(+). Its function is as follows. Catalyzes the reversible oxidation of malate to oxaloacetate. This chain is Malate dehydrogenase, found in Bartonella tribocorum (strain CIP 105476 / IBS 506).